Here is a 327-residue protein sequence, read N- to C-terminus: tRNA uridine(34) hydroxylase (327 aa).

Residues 122–218 (QENRCLVLDV…YGLKMGTGKW (97 aa)) enclose the Rhodanese domain. The active-site Cysteine persulfide intermediate is Cys178.

It belongs to the TrhO family.

It catalyses the reaction uridine(34) in tRNA + AH2 + O2 = 5-hydroxyuridine(34) in tRNA + A + H2O. Its function is as follows. Catalyzes oxygen-dependent 5-hydroxyuridine (ho5U) modification at position 34 in tRNAs. The sequence is that of tRNA uridine(34) hydroxylase from Chlamydia trachomatis serovar L2 (strain ATCC VR-902B / DSM 19102 / 434/Bu).